A 504-amino-acid chain; its full sequence is uncharacterized protein (504 aa).

This is an uncharacterized protein from Klebsiella pneumoniae.